Here is an 87-residue protein sequence, read N- to C-terminus: Small ribosomal subunit protein eS21 (87 aa).

This sequence belongs to the eukaryotic ribosomal protein eS21 family. In terms of assembly, component of the small ribosomal subunit (SSU). Mature N.crassa ribosomes consist of a small (40S) and a large (60S) subunit. The 40S small subunit contains 1 molecule of ribosomal RNA (18S rRNA) and at least 32 different proteins. The large 60S subunit contains 3 rRNA molecules (26S, 5.8S and 5S rRNA) and at least 42 different proteins.

Its subcellular location is the cytoplasm. Functionally, component of the ribosome, a large ribonucleoprotein complex responsible for the synthesis of proteins in the cell. The small ribosomal subunit (SSU) binds messenger RNAs (mRNAs) and translates the encoded message by selecting cognate aminoacyl-transfer RNA (tRNA) molecules. The large subunit (LSU) contains the ribosomal catalytic site termed the peptidyl transferase center (PTC), which catalyzes the formation of peptide bonds, thereby polymerizing the amino acids delivered by tRNAs into a polypeptide chain. The nascent polypeptides leave the ribosome through a tunnel in the LSU and interact with protein factors that function in enzymatic processing, targeting, and the membrane insertion of nascent chains at the exit of the ribosomal tunnel. The protein is Small ribosomal subunit protein eS21 (crp-7) of Neurospora crassa (strain ATCC 24698 / 74-OR23-1A / CBS 708.71 / DSM 1257 / FGSC 987).